The chain runs to 212 residues: NADH-quinone oxidoreductase subunit I (212 aa).

4Fe-4S ferredoxin-type domains lie at 76 to 105 (RLLE…IITD) and 115 to 144 (LNYS…HGDL). The [4Fe-4S] cluster site is built by Cys-85, Cys-88, Cys-91, Cys-95, Cys-124, Cys-127, Cys-130, and Cys-134.

This sequence belongs to the complex I 23 kDa subunit family. As to quaternary structure, NDH-1 is composed of 14 different subunits. Subunits NuoA, H, J, K, L, M, N constitute the membrane sector of the complex. [4Fe-4S] cluster serves as cofactor.

The protein localises to the cell inner membrane. It catalyses the reaction a quinone + NADH + 5 H(+)(in) = a quinol + NAD(+) + 4 H(+)(out). Its function is as follows. NDH-1 shuttles electrons from NADH, via FMN and iron-sulfur (Fe-S) centers, to quinones in the respiratory chain. The immediate electron acceptor for the enzyme in this species is believed to be ubiquinone. Couples the redox reaction to proton translocation (for every two electrons transferred, four hydrogen ions are translocated across the cytoplasmic membrane), and thus conserves the redox energy in a proton gradient. This is NADH-quinone oxidoreductase subunit I from Helicobacter hepaticus (strain ATCC 51449 / 3B1).